Here is an 88-residue protein sequence, read N- to C-terminus: Small ribosomal subunit protein uS17 (88 aa).

Belongs to the universal ribosomal protein uS17 family. Part of the 30S ribosomal subunit.

Functionally, one of the primary rRNA binding proteins, it binds specifically to the 5'-end of 16S ribosomal RNA. The chain is Small ribosomal subunit protein uS17 from Nitratidesulfovibrio vulgaris (strain DSM 19637 / Miyazaki F) (Desulfovibrio vulgaris).